The sequence spans 985 residues: MVKLTHLLARAWLVPLAYGASQSLLSTTAPSQPQFTIPASADVGAQLIANIDDPQAADAQSVCPGYKASKVQHNSRGFTASLQLAGRPCNVYGTDVESLTLSVEYQDSDRLNIQILPTHVDSTNASWYFLSENLVPRPKASLNASVSQSDLFVSWSNEPSFNFKVIRKATGDALFSTEGTVLVYENQFIEFVTALPEEYNLYGLGEHITQFRLQRNANLTIYPSDDGTPIDQNLYGQHPFYLDTRYYKGDRQNGSYIPVKSSEADASQDYISLSHGVFLRNSHGLEILLRSQKLIWRTLGGGIDLTFYSGPAPADVTRQYLTSTVGLPAMQQYNTLGFHQCRWGYNNWSDLADVVANFEKFEIPLEYIWTDIDYMHGYRNFDNDQHRFSYSEGDEFLSKLHESGRYYVPIVDAALYIPNPENASDAYATYDRGAADDVFLKNPDGSLYIGAVWPGYTVFPDWHHPKAVDFWANELVIWSKKVAFDGVWYDMSEVSSFCVGSCGTGNLTLNPAHPSFLLPGEPGDIIYDYPEAFNITNATEAASASAGASSQAAATATTTSTSVSYLRTTPTPGVRNVEHPPYVINHDQEGHDLSVHAVSPNATHVDGVEEYDVHGLYGHQGLNATYQGLLEVWSHKRRPFIIGRSTFAGSGKWAGHWGGDNYSKWWSMYYSISQALSFSLFGIPMFGADTCGFNGNSDEELCNRWMQLSAFFPFYRNHNELSTIPQEPYRWASVIEATKSAMRIRYAILPYFYTLFDLAHTTGSTVMRALSWEFPNDPTLAAVETQFMVGPAIMVVPVLEPLVNTVKGVFPGVGHGEVWYDWYTQAAVDAKPGVNTTISAPLGHIPVYVRGGNILPMQEPALTTREARQTPWALLAALGSNGTASGQLYLDDGESIYPNATLHVDFTASRSSLRSSAQGRWKERNPLANVTVLGVNKEPSAVTLNGQAVFPGSVTYNSTSQVLFVGGLQNLTKGGAWAENWVLEW.

Residues 1 to 25 (MVKLTHLLARAWLVPLAYGASQSLL) form the signal peptide. An O-linked (Man) threonine glycan is attached at Thr36. Asn124, Asn143, Asn218, Asn347, and Asn422 each carry an N-linked (GlcNAc...) asparagine glycan. The active-site Nucleophile is Asp490. Glu493 is a catalytic residue. N-linked (GlcNAc...) asparagine glycosylation is found at Asn506, Asn534, and Asn537. Residues Ser545 and Ser550 are each glycosylated (O-linked (Man) serine). Thr559 carries an O-linked (Man) threonine glycan. A glycan (O-linked (Man) serine) is linked at Ser560. Thr561 is a glycosylation site (O-linked (Man) threonine). Ser562 carries O-linked (Man) serine glycosylation. Thr571 carries an O-linked (Man) threonine glycan. N-linked (GlcNAc...) asparagine glycans are attached at residues Asn601 and Asn623. Catalysis depends on Asp660, which acts as the Proton donor. 2 N-linked (GlcNAc...) asparagine glycosylation sites follow: Asn835 and Asn881. Residue Ser895 is glycosylated (O-linked (Man) serine). 3 N-linked (GlcNAc...) asparagine glycosylation sites follow: Asn899, Asn957, and Asn970.

This sequence belongs to the glycosyl hydrolase 31 family. Post-translationally, the O-linked saccharide is not identified, but is probably mannose.

It catalyses the reaction Hydrolysis of terminal, non-reducing (1-&gt;4)-linked alpha-D-glucose residues with release of alpha-D-glucose.. Functionally, hydrolyzes malto-oligosaccharides, but has a low activity toward soluble starch. The chain is Alpha-glucosidase (aglA) from Aspergillus niger.